The sequence spans 194 residues: uncharacterized protein (194 aa).

Belongs to the mimivirus R457/R459 family.

It is found in the virion. This is an uncharacterized protein from Acanthamoeba polyphaga mimivirus (APMV).